The following is a 157-amino-acid chain: uncharacterized protein (157 aa).

The N-acetyltransferase domain maps to 9–154 (LLINYKTLDE…ETNLNAVTNE (146 aa)).

This is an uncharacterized protein from Bacillus cereus (strain G9842).